The primary structure comprises 93 residues: Protein Tat (93 aa).

Residues 1 to 24 (MEPVDPELEPWNHPGSQPKTACNN) form an interaction with human CREBBP region. A transactivation region spans residues 1–48 (MEPVDPELEPWNHPGSQPKTACNNCHCKVCCYHCVYCFTKKGLGISYG). The Zn(2+) site is built by Cys22, Cys25, and Cys27. The tract at residues 22 to 37 (CNNCHCKVCCYHCVYC) is cysteine-rich. N6-acetyllysine; by host PCAF is present on Lys28. Zn(2+) is bound by residues Cys30, His33, Cys34, and Cys37. The interval 38-48 (FTKKGLGISYG) is core. Basic residues predominate over residues 48 to 58 (GRKKRSQRRRT). Residues 48 to 93 (GRKKRSQRRRTPQSNKSHQDPLPKQPLSQRLGDQTGQKEQKKTLES) form a disordered region. The short motif at 49-57 (RKKRSQRRR) is the Nuclear localization signal, RNA-binding (TAR), and protein transduction element. The interval 49–86 (RKKRSQRRRTPQSNKSHQDPLPKQPLSQRLGDQTGQKE) is interaction with the host capping enzyme RNGTT. Residues Lys50 and Lys51 each carry the N6-acetyllysine; by host EP300 and GCN5L2 modification. The residue at position 52 (Arg52) is an Asymmetric dimethylarginine; by host PRMT6. A Glycyl lysine isopeptide (Lys-Gly) (interchain with G-Cter in ubiquitin) cross-link involves residue Lys71. The segment covering 73–82 (PLSQRLGDQT) has biased composition (polar residues). The span at 83–93 (GQKEQKKTLES) shows a compositional bias: basic and acidic residues.

This sequence belongs to the lentiviruses Tat family. As to quaternary structure, interacts with host CCNT1. Associates with the P-TEFb complex composed at least of Tat, P-TEFb (CDK9 and CCNT1), TAR RNA, RNA Pol II. Recruits the HATs CREBBP, TAF1/TFIID, EP300, PCAF and GCN5L2. Interacts with host KAT5/Tip60; this interaction targets the latter to degradation. Interacts with the host deacetylase SIRT1. Interacts with host capping enzyme RNGTT; this interaction stimulates RNGTT. Binds to host KDR, and to the host integrins ITGAV/ITGB3 and ITGA5/ITGB1. Interacts with host KPNB1/importin beta-1 without previous binding to KPNA1/importin alpha-1. Interacts with EIF2AK2. Interacts with host nucleosome assembly protein NAP1L1; this interaction may be required for the transport of Tat within the nucleus, since the two proteins interact at the nuclear rim. Interacts with host C1QBP/SF2P32; this interaction involves lysine-acetylated Tat. Interacts with the host chemokine receptors CCR2, CCR3 and CXCR4. Interacts with host DPP4/CD26; this interaction may trigger an anti-proliferative effect. Interacts with host LDLR. Interacts with the host extracellular matrix metalloproteinase MMP1. Interacts with host PRMT6; this interaction mediates Tat's methylation. Interacts with, and is ubiquitinated by MDM2/Hdm2. Interacts with host PSMC3 and HTATIP2. Interacts with STAB1; this interaction may overcome SATB1-mediated repression of IL2 and IL2RA (interleukin) in T cells by binding to the same domain than HDAC1. Interacts (when acetylated) with human CDK13, thereby increasing HIV-1 mRNA splicing and promoting the production of the doubly spliced HIV-1 protein Nef. Interacts with host TBP; this interaction modulates the activity of transcriptional pre-initiation complex. Interacts with host RELA. Asymmetrical arginine methylation by host PRMT6 seems to diminish the transactivation capacity of Tat and affects the interaction with host CCNT1. In terms of processing, acetylation by EP300, CREBBP, GCN5L2/GCN5 and PCAF regulates the transactivation activity of Tat. EP300-mediated acetylation of Lys-50 promotes dissociation of Tat from the TAR RNA through the competitive binding to PCAF's bromodomain. In addition, the non-acetylated Tat's N-terminus can also interact with PCAF. PCAF-mediated acetylation of Lys-28 enhances Tat's binding to CCNT1. Lys-50 is deacetylated by SIRT1. Post-translationally, polyubiquitination by host MDM2 does not target Tat to degradation, but activates its transactivation function and fosters interaction with CCNT1 and TAR RNA. Phosphorylated by EIF2AK2 on serine and threonine residues adjacent to the basic region important for TAR RNA binding and function. Phosphorylation of Tat by EIF2AK2 is dependent on the prior activation of EIF2AK2 by dsRNA.

Its subcellular location is the host nucleus. It is found in the host nucleolus. The protein localises to the host cytoplasm. It localises to the secreted. Its function is as follows. Transcriptional activator that increases RNA Pol II processivity, thereby increasing the level of full-length viral transcripts. Recognizes a hairpin structure at the 5'-LTR of the nascent viral mRNAs referred to as the transactivation responsive RNA element (TAR) and recruits the cyclin T1-CDK9 complex (P-TEFb complex) that will in turn hyperphosphorylate the RNA polymerase II to allow efficient elongation. The CDK9 component of P-TEFb and other Tat-activated kinases hyperphosphorylate the C-terminus of RNA Pol II that becomes stabilized and much more processive. Other factors such as HTATSF1/Tat-SF1, SUPT5H/SPT5, and HTATIP2 are also important for Tat's function. Besides its effect on RNA Pol II processivity, Tat induces chromatin remodeling of proviral genes by recruiting the histone acetyltransferases (HATs) CREBBP, EP300 and PCAF to the chromatin. This also contributes to the increase in proviral transcription rate, especially when the provirus integrates in transcriptionally silent region of the host genome. To ensure maximal activation of the LTR, Tat mediates nuclear translocation of NF-kappa-B by interacting with host RELA. Through its interaction with host TBP, Tat may also modulate transcription initiation. Tat can reactivate a latently infected cell by penetrating in it and transactivating its LTR promoter. In the cytoplasm, Tat is thought to act as a translational activator of HIV-1 mRNAs. Extracellular circulating Tat can be endocytosed by surrounding uninfected cells via the binding to several surface receptors such as CD26, CXCR4, heparan sulfate proteoglycans (HSPG) or LDLR. Neurons are rarely infected, but they internalize Tat via their LDLR. Through its interaction with nuclear HATs, Tat is potentially able to control the acetylation-dependent cellular gene expression. Modulates the expression of many cellular genes involved in cell survival, proliferation or in coding for cytokines or cytokine receptors. Tat plays a role in T-cell and neurons apoptosis. Tat induced neurotoxicity and apoptosis probably contribute to neuroAIDS. Circulating Tat also acts as a chemokine-like and/or growth factor-like molecule that binds to specific receptors on the surface of the cells, affecting many cellular pathways. In the vascular system, Tat binds to ITGAV/ITGB3 and ITGA5/ITGB1 integrins dimers at the surface of endothelial cells and competes with bFGF for heparin-binding sites, leading to an excess of soluble bFGF. The polypeptide is Protein Tat (Pan troglodytes (Chimpanzee)).